A 326-amino-acid polypeptide reads, in one-letter code: L-lactate dehydrogenase (326 aa).

NAD(+)-binding positions include Val20, Asp41, Lys46, Tyr71, and 85 to 86 (GA). Positions 88 and 94 each coordinate substrate. NAD(+)-binding positions include Ser107, 124-126 (AAN), and Ser149. 126 to 129 (NPVD) contacts substrate. Residue 154 to 157 (DTAR) coordinates substrate. Beta-D-fructose 1,6-bisphosphate-binding positions include Arg159, 171 to 174 (RSVH), and His174. Catalysis depends on His181, which acts as the Proton acceptor. Tyr226 is modified (phosphotyrosine). Position 235 (Thr235) interacts with substrate.

The protein belongs to the LDH/MDH superfamily. LDH family. Homotetramer.

It localises to the cytoplasm. The catalysed reaction is (S)-lactate + NAD(+) = pyruvate + NADH + H(+). It participates in fermentation; pyruvate fermentation to lactate; (S)-lactate from pyruvate: step 1/1. With respect to regulation, allosterically activated by fructose 1,6-bisphosphate (FBP) alone under acidic conditions, while it requires additional activation factors such as divalent cations (Mn(2+)) under neutral conditions. Under acidic conditions, Mn(2+) is an inhibitor in the absence of fructose 1,6-bisphosphate (FBP). In case of L.casei, L-LDH binds four fructose 1,6-bisphosphate (FBP) molecules per tetramer, while usual allosteric L-LDH binds only two fructose 1,6-bisphosphate (FBP) molecules per tetramer. In terms of biological role, catalyzes the conversion of lactate to pyruvate. This chain is L-lactate dehydrogenase, found in Lacticaseibacillus casei (Lactobacillus casei).